A 263-amino-acid chain; its full sequence is Glutamate racemase (263 aa).

Residues 13-14 (DS) and 45-46 (YG) contribute to the substrate site. The Proton donor/acceptor role is filled by cysteine 77. Residue 78–79 (NT) coordinates substrate. Residue cysteine 185 is the Proton donor/acceptor of the active site. 186-187 (TH) contributes to the substrate binding site.

Belongs to the aspartate/glutamate racemases family.

The enzyme catalyses L-glutamate = D-glutamate. It participates in cell wall biogenesis; peptidoglycan biosynthesis. In terms of biological role, provides the (R)-glutamate required for cell wall biosynthesis. This Vibrio vulnificus (strain YJ016) protein is Glutamate racemase.